The sequence spans 159 residues: Galactose-specific lectin nattectin (159 aa).

The first 21 residues, 1–21, serve as a signal peptide directing secretion; that stretch reads MASVPHFTVFLFLACALGIGA. Positions 22–24 are excised as a propeptide; sequence NVT. Intrachain disulfides connect Cys31/Cys42, Cys59/Cys155, and Cys132/Cys147. Residues 38–156 form the C-type lectin domain; the sequence is HGSRCFTFHR…CKVKRSFLCA (119 aa). The Ca(2+) site is built by Gln122, Asp124, Glu130, and Asn143. Positions 122–124 match the Galactose-binding motif; that stretch reads QPD.

Monomer. Not glycosylated. As to expression, expressed by the venom gland.

The protein resides in the secreted. Functionally, galactose specific lectin that exhibits hemagglutination activity (minimum hemagluttination concentration = 2.5 ug/well) in a calcium-independent fashion. Has remarkable pro-inflammatory activity, inducing neutrophil mobilization in mice. Plays a crucial role in the innate immune system and chronic manifestations, especially in neutrophil mobilization. The polypeptide is Galactose-specific lectin nattectin (Thalassophryne nattereri (Copper Joe toadfish)).